The chain runs to 210 residues: Large ribosomal subunit protein uL4 (210 aa).

The segment covering 47–64 (SRQGTRSQKSRSEVSGSN) has biased composition (polar residues). A disordered region spans residues 47–83 (SRQGTRSQKSRSEVSGSNKKPWRQKGTGRARSGSVKS).

This sequence belongs to the universal ribosomal protein uL4 family. As to quaternary structure, part of the 50S ribosomal subunit.

One of the primary rRNA binding proteins, this protein initially binds near the 5'-end of the 23S rRNA. It is important during the early stages of 50S assembly. It makes multiple contacts with different domains of the 23S rRNA in the assembled 50S subunit and ribosome. Its function is as follows. Forms part of the polypeptide exit tunnel. This is Large ribosomal subunit protein uL4 from Blochmanniella pennsylvanica (strain BPEN).